Here is a 337-residue protein sequence, read N- to C-terminus: Phosphate acyltransferase (337 aa).

It belongs to the PlsX family. Homodimer. Probably interacts with PlsY.

It is found in the cytoplasm. It carries out the reaction a fatty acyl-[ACP] + phosphate = an acyl phosphate + holo-[ACP]. It participates in lipid metabolism; phospholipid metabolism. In terms of biological role, catalyzes the reversible formation of acyl-phosphate (acyl-PO(4)) from acyl-[acyl-carrier-protein] (acyl-ACP). This enzyme utilizes acyl-ACP as fatty acyl donor, but not acyl-CoA. The polypeptide is Phosphate acyltransferase (Polynucleobacter asymbioticus (strain DSM 18221 / CIP 109841 / QLW-P1DMWA-1) (Polynucleobacter necessarius subsp. asymbioticus)).